Consider the following 295-residue polypeptide: Aspartate carbamoyltransferase catalytic subunit (295 aa).

Arg49 and Thr50 together coordinate carbamoyl phosphate. Lys77 lines the L-aspartate pocket. The carbamoyl phosphate site is built by Arg99, His127, and Gln130. Arg161 and Arg212 together coordinate L-aspartate. 2 residues coordinate carbamoyl phosphate: Gly251 and Pro252.

This sequence belongs to the aspartate/ornithine carbamoyltransferase superfamily. ATCase family. As to quaternary structure, heterododecamer (2C3:3R2) of six catalytic PyrB chains organized as two trimers (C3), and six regulatory PyrI chains organized as three dimers (R2).

It carries out the reaction carbamoyl phosphate + L-aspartate = N-carbamoyl-L-aspartate + phosphate + H(+). It functions in the pathway pyrimidine metabolism; UMP biosynthesis via de novo pathway; (S)-dihydroorotate from bicarbonate: step 2/3. Functionally, catalyzes the condensation of carbamoyl phosphate and aspartate to form carbamoyl aspartate and inorganic phosphate, the committed step in the de novo pyrimidine nucleotide biosynthesis pathway. The chain is Aspartate carbamoyltransferase catalytic subunit from Campylobacter jejuni subsp. jejuni serotype O:2 (strain ATCC 700819 / NCTC 11168).